A 213-amino-acid chain; its full sequence is Leucine-rich repeat protein 1 (213 aa).

The N-terminal stretch at 1–21 (MGAGALGVVAMVAAAVVVAMA) is a signal peptide. 4 LRR repeats span residues 90–113 (DHLQYLELYKNNIQGTIPSELGNL), 115–137 (NLISLDLYKNNISGTIPPTLGKL), 138–161 (TSLVFLRLNGNRLTGPIPRELAGI), and 163–186 (SLKVVDVSSNDLCGTIPTSGPFEH).

As to quaternary structure, interacts with HIR1.

The protein localises to the early endosome membrane. Its subcellular location is the late endosome membrane. It localises to the cell membrane. In terms of biological role, involved in plant defense response. The sequence is that of Leucine-rich repeat protein 1 from Oryza sativa subsp. indica (Rice).